A 133-amino-acid chain; its full sequence is Mediator of RNA polymerase II transcription subunit 10 (133 aa).

Polar residues predominate over residues 1-13 (MSTEASTGETPEF). Positions 1-28 (MSTEASTGETPEFQSYDHRGSPTQEAMK) are disordered. The span at 15-28 (SYDHRGSPTQEAMK) shows a compositional bias: basic and acidic residues.

It belongs to the Mediator complex subunit 10 family. Component of the Mediator complex.

It localises to the nucleus. Its function is as follows. Component of the Mediator complex, a coactivator involved in the regulated transcription of nearly all RNA polymerase II-dependent genes. Mediator functions as a bridge to convey information from gene-specific regulatory proteins to the basal RNA polymerase II transcription machinery. Mediator is recruited to promoters by direct interactions with regulatory proteins and serves as a scaffold for the assembly of a functional preinitiation complex with RNA polymerase II and the general transcription factors. The polypeptide is Mediator of RNA polymerase II transcription subunit 10 (NUT2) (Phaeosphaeria nodorum (strain SN15 / ATCC MYA-4574 / FGSC 10173) (Glume blotch fungus)).